The following is an 842-amino-acid chain: ATP-binding cassette sub-family B member 6 (842 aa).

The Lumenal segment spans residues 1-26; that stretch reads MVTVGNYCEAEGPLGPAWAQNGLSPC. The interval 1-205 is required for the lysosomal targeting; that stretch reads MVTVGNYCEA…SGGLFILGLW (205 aa). Residues 1-236 form a required for ATPase activity region; the sequence is MVTVGNYCEA…RNQAQSTDRT (236 aa). C8 and C26 are disulfide-bonded. The chain crosses the membrane as a helical span at residues 27–47; it reads FFFTLVPSTLMALGALALVLV. At 48-72 the chain is on the cytoplasmic side; it reads LPCRRRDVPSGTEELFWAADSRVAP. The chain crosses the membrane as a helical span at residues 73–93; sequence YALQLFLATLQVALPLAGLAG. Residues 94–106 lie on the Lumenal side of the membrane; it reads RVGTARGVRLPGY. The helical transmembrane segment at 107 to 127 threads the bilayer; that stretch reads LLLASMLGSLASACGLWLLVA. Residues 128 to 147 are Cytoplasmic-facing; that stretch reads ERRQARQSLAMGVWMKFRHS. A helical membrane pass occupies residues 148–168; the sequence is SGLLLLWTVAFAAENLALVSW. Residues 169 to 185 lie on the Lumenal side of the membrane; it reads NSPQWWWARADLGQQVQ. Residues 186–206 form a helical membrane-spanning segment; it reads FGLWVLRYVISGGLFILGLWA. Residues 207 to 263 are Cytoplasmic-facing; sequence PGLRPQSYTLRVHEADQDVERNQAQSTDRTSTWRDLGRKLRLLSSYLWPRGSPALQF. The chain crosses the membrane as a helical span at residues 264-284; the sequence is IVLICLGLMGLDRALNVLVPI. The 292-residue stretch at 265 to 556 folds into the ABC transmembrane type-1 domain; it reads VLICLGLMGL…FGTYYRMIQT (292 aa). At 285-305 the chain is on the lumenal side; the sequence is FYRDIVNLLTSKAPWSSLAWT. A helical transmembrane segment spans residues 306-326; that stretch reads VTTYVFLKFLQGGGTGSTGFV. The Cytoplasmic portion of the chain corresponds to 327 to 375; it reads SNLRTFLWIRVQQFTSRGVELRLFSHLHELSLRWHLGRRTGEVLRVVDR. The chain crosses the membrane as a helical span at residues 376 to 396; that stretch reads GTSSVTGLLSYLVFNIIPTLA. Residue D397 is a topological domain, lumenal. The chain crosses the membrane as a helical span at residues 398-418; the sequence is IIIGIIYFSMFFNAWFGLIVF. Over 419 to 499 the chain is Cytoplasmic; the sequence is LCMSLYLFLT…SSASLVVLNQ (81 aa). A helical transmembrane segment spans residues 500–520; it reads TQNLVIGLGLLAGSLLCAYFV. Over 521-529 the chain is Lumenal; it reads SEQKLQVGD. The helical transmembrane segment at 530–550 threads the bilayer; that stretch reads FVLFGTYITQLYMPLNWFGTY. Over 551-842 the chain is Cytoplasmic; the sequence is YRMIQTNFID…SEDSKPQDIA (292 aa). The ABC transporter domain maps to 590–824; the sequence is IEFENVHFSY…GGVYAEMWQL (235 aa). 623–630 contributes to the ATP binding site; that stretch reads GPSGAGKS.

The protein belongs to the ABC transporter superfamily. ABCB family. Heavy Metal importer (TC 3.A.1.210) subfamily. As to quaternary structure, homodimer. Post-translationally, N-glycosylated. As to expression, highly expressed in the liver, adrenal glands, and testis.

The protein resides in the cell membrane. Its subcellular location is the mitochondrion outer membrane. It is found in the endoplasmic reticulum membrane. It localises to the golgi apparatus membrane. The protein localises to the endosome membrane. The protein resides in the lysosome membrane. Its subcellular location is the late endosome membrane. It is found in the early endosome membrane. It localises to the secreted. The protein localises to the extracellular exosome. The protein resides in the mitochondrion. Its subcellular location is the endosome. It is found in the multivesicular body membrane. It localises to the melanosome membrane. The catalysed reaction is heme b(in) + ATP + H2O = heme b(out) + ADP + phosphate + H(+). It carries out the reaction coproporphyrin III(in) + ATP + H2O = coproporphyrin III(out) + ADP + phosphate + H(+). It catalyses the reaction pheophorbide a(in) + ATP + H2O = pheophorbide a(out) + ADP + phosphate + H(+). The enzyme catalyses coproporphyrinogen III(in) + ATP + H2O = coproporphyrinogen III(out) + ADP + phosphate + H(+). The catalysed reaction is protoporphyrin IX(in) + ATP + H2O = protoporphyrin IX(out) + ADP + phosphate + H(+). It carries out the reaction coproporphyrin I(in) + ATP + H2O = coproporphyrin I(out) + ADP + phosphate + H(+). It catalyses the reaction uroporphyrin I(in) + ATP + H2O = uroporphyrin I(out) + ADP + phosphate + H(+). The enzyme catalyses uroporphyrin III(in) + ATP + H2O = uroporphyrin III(out) + ADP + phosphate + H(+). In terms of biological role, ATP-dependent transporter that catalyzes the transport of a broad-spectrum of porphyrins from the cytoplasm to the extracellular space through the plasma membrane or into the vesicle lumen. May also function as an ATP-dependent importer of porphyrins from the cytoplasm into the mitochondria, in turn may participate in the de novo heme biosynthesis regulation and in the coordination of heme and iron homeostasis during phenylhydrazine stress. May also play a key role in the early steps of melanogenesis producing PMEL amyloid fibrils. In vitro, it confers to cells a resistance to toxic metal such as arsenic and cadmium and against chemotherapeutics agent such as 5-fluorouracil, SN-38 and vincristin. In addition may play a role in the transition metal homeostasis. This chain is ATP-binding cassette sub-family B member 6, found in Mesocricetus auratus (Golden hamster).